We begin with the raw amino-acid sequence, 573 residues long: O-fucosyltransferase 20 (573 aa).

The Cytoplasmic segment spans residues 1-60 (MALSKNSNSNSFNKKKVSYISVPSQIINSLSSSSLQSLLVSPKKSSRSTNRFSFSYRNPR). The helical; Signal-anchor for type II membrane protein transmembrane segment at 61-81 (IWFFTLFLVSLFGMLKLGFNV) threads the bilayer. At 82 to 573 (DPISLPFSRY…RQQQEQQSDA (492 aa)) the chain is on the lumenal side. Asn138 carries an N-linked (GlcNAc...) asparagine glycan. 344-346 (HLR) contributes to the substrate binding site. Residues Asn385 and Asn517 are each glycosylated (N-linked (GlcNAc...) asparagine). Positions 547–556 (AGKDVTKHPV) are enriched in basic and acidic residues. The tract at residues 547 to 573 (AGKDVTKHPVPECMCSDRQQQEQQSDA) is disordered. Polar residues predominate over residues 563–573 (DRQQQEQQSDA).

This sequence belongs to the glycosyltransferase GT106 family. Interacts with RACK1A. As to expression, highly expressed in shoot apical meristem (SAM) and in young vegetative tissues.

Its subcellular location is the golgi apparatus membrane. The protein operates within glycan metabolism. May play a role in the biosynthesis of matrix polysaccharides and contribute to the biomechanics and development of the plant cell wall. In Arabidopsis thaliana (Mouse-ear cress), this protein is O-fucosyltransferase 20.